A 39-amino-acid polypeptide reads, in one-letter code: Cygnin (39 aa).

Residue Gln-1 is modified to Pyrrolidone carboxylic acid. 3 disulfide bridges follow: Cys-6–Cys-33, Cys-12–Cys-28, and Cys-16–Cys-32.

The protein belongs to the transferrin family.

This chain is Cygnin, found in Cygnus atratus (Black swan).